Reading from the N-terminus, the 541-residue chain is MATPTSVASSASRDMVQRIHRVTRENRHLWYQLTVLQQPERARACGSGMKANSDRRPVDPPPVVELRIIEGPSVEEGKDITFDYNANFFLYASLEQARPIAHGRVQNGATNNPPILTGVPASGMAYLDRPTEAGYFIFPDLSVRHEGYFRLSFSLYETTKESKDFDMEPADSDLPAGVDWRMEIKTQPFNVFSAKKFPGLMESTSLSKTVADQGCRVRIRRDVRMRKRDGKGSGYDRREEEYARRRTVTPAPAEDPMRARSTSNASEHRAPYMPQDSQRRPSAAESYHAPSLPHAPSLPHAPPPPAYDAPPPAARPGHLQFGGEQNMPQYGGPAPPRSYAHPQGAPIPPVTPTGPYPTASAPSPYPKHDSQPYSYGPRPPVSSASPAPPMKHAGYDSRPSEPYAPQSPSGYTPTERRPSFVSYPSPAPMTPYIAPPAPSPARHMPTQSSLAPLKIASLVSPLPPIEAQTEPLPPPPLLPTGGKRKHDYVFSQNTKPLHNGQRQLDAHFGHGYRGLTPEPDQGLYSRADGQIGVVTFNQYQV.

Residues 26-220 enclose the Velvet domain; sequence NRHLWYQLTV…ADQGCRVRIR (195 aa). Positions 40-45 match the Nuclear localization signal motif; sequence ERARAC. Disordered stretches follow at residues 222 to 447 and 464 to 483; these read DVRM…MPTQ and PIEAQTEPLPPPPLLPTGGK. The span at 230–244 shows a compositional bias: basic and acidic residues; the sequence is GKGSGYDRREEEYAR. The segment covering 289–298 has biased composition (low complexity); it reads APSLPHAPSL. Composition is skewed to pro residues over residues 299 to 314, 345 to 355, and 425 to 439; these read PHAPPPPAYDAPPPAA, APIPPVTPTGP, and SPAPMTPYIAPPAPS. Residues 444–472 are PEST; it reads MPTQSSLAPLKIASLVSPLPPIEAQTEPL.

The protein belongs to the velvet family. VeA subfamily. As to quaternary structure, component of the heterotrimeric velvet complex composed of LAE1, VEL1 and VEL2; VEL1 acting as a bridging protein between LAE1 and VEL2.

It is found in the nucleus. The protein localises to the cytoplasm. Its function is as follows. Component of the velvet transcription factor complex that controls sexual/asexual developmental ratio in response to light, promoting sexual development in the darkness while stimulating asexual sporulation under illumination. The velvet complex acts as a global regulator for secondary metabolite gene expression. Controls the expression of the gliotoxin gene cluster. Plays a key role in mycoparasitism. This chain is Developmental and secondary metabolism regulator VEL1, found in Hypocrea virens (strain Gv29-8 / FGSC 10586) (Gliocladium virens).